The sequence spans 442 residues: tRNA-2-methylthio-N(6)-dimethylallyladenosine synthase (442 aa).

Residues 2–117 (QGLYIKSYGC…LPELIIKARR (116 aa)) enclose the MTTase N-terminal domain. Residues cysteine 11, cysteine 47, cysteine 80, cysteine 157, cysteine 161, and cysteine 164 each coordinate [4Fe-4S] cluster. One can recognise a Radical SAM core domain in the interval 143-374 (KNQEVSAFIS…QELLREQQLA (232 aa)). In terms of domain architecture, TRAM spans 377–442 (RNMIGQTCSV…QNSVTGIVVN (66 aa)).

This sequence belongs to the methylthiotransferase family. MiaB subfamily. Monomer. The cofactor is [4Fe-4S] cluster.

Its subcellular location is the cytoplasm. It carries out the reaction N(6)-dimethylallyladenosine(37) in tRNA + (sulfur carrier)-SH + AH2 + 2 S-adenosyl-L-methionine = 2-methylsulfanyl-N(6)-dimethylallyladenosine(37) in tRNA + (sulfur carrier)-H + 5'-deoxyadenosine + L-methionine + A + S-adenosyl-L-homocysteine + 2 H(+). Functionally, catalyzes the methylthiolation of N6-(dimethylallyl)adenosine (i(6)A), leading to the formation of 2-methylthio-N6-(dimethylallyl)adenosine (ms(2)i(6)A) at position 37 in tRNAs that read codons beginning with uridine. In Ehrlichia chaffeensis (strain ATCC CRL-10679 / Arkansas), this protein is tRNA-2-methylthio-N(6)-dimethylallyladenosine synthase.